The sequence spans 335 residues: Protein STRICTOSIDINE SYNTHASE-LIKE 12 (335 aa).

Positions M1–S22 are cleaved as a signal peptide. The N-linked (GlcNAc...) asparagine glycan is linked to N80.

The protein belongs to the strictosidine synthase family.

The protein localises to the vacuole. The enzyme catalyses 3alpha(S)-strictosidine + H2O = secologanin + tryptamine. Its pathway is alkaloid biosynthesis; 3alpha(S)-strictosidine biosynthesis; 3alpha(S)-strictosidine from secologanin and tryptamine: step 1/1. Functionally, catalyzes the stereospecific condensation of tryptamine with secologanin to form strictosidine, the key intermediate of indole alkaloid biosynthesis. This chain is Protein STRICTOSIDINE SYNTHASE-LIKE 12, found in Arabidopsis thaliana (Mouse-ear cress).